Reading from the N-terminus, the 373-residue chain is Citrate synthase (373 aa).

Active-site residues include histidine 262 and aspartate 314.

Belongs to the citrate synthase family. Homohexamer.

The catalysed reaction is oxaloacetate + acetyl-CoA + H2O = citrate + CoA + H(+). Its pathway is carbohydrate metabolism; tricarboxylic acid cycle; isocitrate from oxaloacetate: step 1/2. This is Citrate synthase (ctsA) from Heyndrickxia coagulans (Weizmannia coagulans).